A 266-amino-acid polypeptide reads, in one-letter code: Outer kinetochore KNL1 complex subunit ZWINT (266 aa).

The tract at residues 95-115 (DQNPDALASEDTSRQKATETK) is disordered. The span at 105–115 (DTSRQKATETK) shows a compositional bias: basic and acidic residues. The stretch at 136–237 (LSEALPQVKE…QRNQSYLQLL (102 aa)) forms a coiled coil. Phosphoserine occurs at positions 232 and 265.

Component of the KNL1 complex composed of KNL1 and ZWINT. Part of the ten-subunit outer kinetochore KMN network that includes the KNL1, MIS12 and NDC80 complexes; a bioriented kinetochore contains approximately 150 copies of the network. Interacts with the MIS12 complex subunits MIS12 DSN1, and PMF1. Interacts with the NDC80 complex subunit NDC80 during mitosis. Interacts with ZW10. Interacts with CETN3. In terms of tissue distribution, expressed abundantly in brain and at lower levels in testis and kidney.

The protein localises to the nucleus. Its subcellular location is the chromosome. It is found in the centromere. It localises to the kinetochore. Acts as a component of the outer kinetochore KNL1 complex that serves as a docking point for spindle assembly checkpoint components and mediates microtubule-kinetochore interactions. Kinetochores, consisting of a centromere-associated inner segment and a microtubule-contacting outer segment, play a crucial role in chromosome segregation by mediating the physical connection between centromeric DNA and spindle microtubules. The outer kinetochore is made up of the ten-subunit KMN network, comprising the MIS12, NDC80 and KNL1 complexes, and auxiliary microtubule-associated components; together they connect the outer kinetochore with the inner kinetochore, bind microtubules, and mediate interactions with mitotic checkpoint proteins that delay anaphase until chromosomes are bioriented on the spindle. Targets the RZZ complex to the kinetochore at prometaphase. Recruits MAD2L1 to the kinetochore, but is not required for BUB1B localization. In addition to orienting mitotic chromosomes, it is also essential for alignment of homologous chromosomes during meiotic metaphase I. In meiosis I, required to activate the spindle assembly checkpoint at unattached kinetochores to correct erroneous kinetochore-microtubule attachments. This Rattus norvegicus (Rat) protein is Outer kinetochore KNL1 complex subunit ZWINT (Zwint).